The following is a 544-amino-acid chain: Cytochrome P450 2U1 (544 aa).

A run of 4 helical transmembrane segments spans residues 30–50 (LDPSGGALLLCGLVALLGWSW), 113–133 (VYGSIFSFFIGHYLVVVLSDF), 261–281 (ICLNSQVLLVNICPWLYYLPF), and 342–362 (LFYIIGDLFIAGTDTTTNSLL). Heme is bound at residue Cys-490. Residues 495-515 (LAKMELFLMFVSLMQSFAFAL) traverse the membrane as a helical segment.

The protein belongs to the cytochrome P450 family. Heme is required as a cofactor. Widely expressed with stronger expression in thymus, heart and cerebellum.

It localises to the endoplasmic reticulum membrane. Its subcellular location is the microsome membrane. The protein localises to the mitochondrion inner membrane. It catalyses the reaction an omega-methyl-long-chain fatty acid + reduced [NADPH--hemoprotein reductase] + O2 = an omega-hydroxy-long-chain fatty acid + oxidized [NADPH--hemoprotein reductase] + H2O + H(+). It carries out the reaction (5Z,8Z,11Z,14Z)-eicosatetraenoate + reduced [NADPH--hemoprotein reductase] + O2 = 19-hydroxy-(5Z,8Z,11Z,14Z)-eicosatetraenoate + oxidized [NADPH--hemoprotein reductase] + H2O + H(+). The enzyme catalyses (5Z,8Z,11Z,14Z)-eicosatetraenoate + reduced [NADPH--hemoprotein reductase] + O2 = 20-hydroxy-(5Z,8Z,11Z,14Z)-eicosatetraenoate + oxidized [NADPH--hemoprotein reductase] + H2O + H(+). The catalysed reaction is N-[(5Z,8Z,11Z,14Z)-eicosatetraenoyl]-serotonin + reduced [NADPH--hemoprotein reductase] + O2 = 2-oxo-N-[(5Z,8Z,11Z,14Z)-eicosatetraenoyl]-serotonin + oxidized [NADPH--hemoprotein reductase] + H2O + H(+). It functions in the pathway lipid metabolism; arachidonate metabolism. In terms of biological role, a cytochrome P450 monooxygenase involved in the metabolism of arachidonic acid and its conjugates. Mechanistically, uses molecular oxygen inserting one oxygen atom into a substrate, and reducing the second into a water molecule, with two electrons provided by NADPH via cytochrome P450 reductase (CPR; NADPH-ferrihemoprotein reductase). Acts as an omega and omega-1 hydroxylase for arachidonic acid and possibly for other long chain fatty acids. May modulate the arachidonic acid signaling pathway and play a role in other fatty acid signaling processes. May down-regulate the biological activities of N-arachidonoyl-serotonin, an endocannabinoid that has anti-nociceptive effects through inhibition of fatty acid amide hydrolase FAAH, TRPV1 receptor and T-type calcium channels. Catalyzes C-2 oxidation of the indole ring of N-arachidonoyl-serotonin forming a less active product 2-oxo-N-arachidonoyl-serotonin. The sequence is that of Cytochrome P450 2U1 from Homo sapiens (Human).